We begin with the raw amino-acid sequence, 364 residues long: Protein L-Myc (364 aa).

3 disordered regions span residues Thr-41 to Gly-81, Asp-111 to Val-172, and Pro-219 to Asn-285. A compositionally biased stretch (basic and acidic residues) spans Ala-228–Glu-245. Residues Thr-281–Leu-333 enclose the bHLH domain. The tract at residues Leu-333–Leu-361 is leucine-zipper.

In terms of assembly, efficient DNA binding requires dimerization with another bHLH protein. Binds DNA as a heterodimer with MAX.

It localises to the nucleus. This Homo sapiens (Human) protein is Protein L-Myc (MYCL).